Consider the following 494-residue polypeptide: Alpha-amylase A (494 aa).

An N-terminal signal peptide occupies residues 1–18; that stretch reads MFLAKSIVCLALLAVANA. Q19 carries the pyrrolidone carboxylic acid modification. The cysteines at positions 46 and 102 are disulfide-linked. 3 residues coordinate Ca(2+): N116, R165, and D174. The cysteines at positions 153 and 167 are disulfide-linked. R202 is a chloride binding site. Catalysis depends on D204, which acts as the Nucleophile. Residue H208 participates in Ca(2+) binding. E241 functions as the Proton donor in the catalytic mechanism. N304 and R343 together coordinate chloride. 2 disulfides stabilise this stretch: C376/C382 and C448/C460.

Belongs to the glycosyl hydrolase 13 family. In terms of assembly, monomer. Ca(2+) is required as a cofactor. Chloride serves as cofactor.

It catalyses the reaction Endohydrolysis of (1-&gt;4)-alpha-D-glucosidic linkages in polysaccharides containing three or more (1-&gt;4)-alpha-linked D-glucose units.. The polypeptide is Alpha-amylase A (Amy-p) (Drosophila melanogaster (Fruit fly)).